We begin with the raw amino-acid sequence, 130 residues long: Vascular-related unknown protein 3 (130 aa).

A disordered region spans residues 45–81 (DDSSMMSDAASPMGCVEEDTASSPSNRTEGYSGMEDN).

Involved in the regulation of plant growth. The chain is Vascular-related unknown protein 3 from Arabidopsis thaliana (Mouse-ear cress).